The following is a 198-amino-acid chain: GTP cyclohydrolase-2 (198 aa).

52–56 (RMHSE) contacts GTP. Positions 57, 68, and 70 each coordinate Zn(2+). GTP is bound by residues glutamine 73, 94 to 96 (EGR), and threonine 116. Aspartate 128 (proton acceptor) is an active-site residue. Arginine 130 serves as the catalytic Nucleophile. The GTP site is built by threonine 151 and lysine 156.

This sequence belongs to the GTP cyclohydrolase II family. Zn(2+) is required as a cofactor.

It catalyses the reaction GTP + 4 H2O = 2,5-diamino-6-hydroxy-4-(5-phosphoribosylamino)-pyrimidine + formate + 2 phosphate + 3 H(+). Its pathway is cofactor biosynthesis; riboflavin biosynthesis; 5-amino-6-(D-ribitylamino)uracil from GTP: step 1/4. Functionally, catalyzes the conversion of GTP to 2,5-diamino-6-ribosylamino-4(3H)-pyrimidinone 5'-phosphate (DARP), formate and pyrophosphate. The protein is GTP cyclohydrolase-2 of Vibrio vulnificus (strain CMCP6).